The following is a 351-amino-acid chain: Cytochrome c biogenesis protein CcsA (351 aa).

8 consecutive transmembrane segments (helical) span residues valine 17–isoleucine 37, asparagine 38–alanine 58, leucine 68–isoleucine 88, leucine 97–leucine 117, methionine 143–isoleucine 163, isoleucine 259–asparagine 279, tryptophan 286–leucine 306, and alanine 320–leucine 340.

Belongs to the CcmF/CycK/Ccl1/NrfE/CcsA family. In terms of assembly, may interact with ccs1.

The protein localises to the cellular thylakoid membrane. In terms of biological role, required during biogenesis of c-type cytochromes (cytochrome c6 and cytochrome f) at the step of heme attachment. The protein is Cytochrome c biogenesis protein CcsA of Nostoc sp. (strain PCC 7120 / SAG 25.82 / UTEX 2576).